A 191-amino-acid chain; its full sequence is Threonylcarbamoyl-AMP synthase (191 aa).

A YrdC-like domain is found at 10-191; it reads PFRVRHAAAE…DGRSGAYLRR (182 aa).

The protein belongs to the SUA5 family. TsaC subfamily.

Its subcellular location is the cytoplasm. It carries out the reaction L-threonine + hydrogencarbonate + ATP = L-threonylcarbamoyladenylate + diphosphate + H2O. Its function is as follows. Required for the formation of a threonylcarbamoyl group on adenosine at position 37 (t(6)A37) in tRNAs that read codons beginning with adenine. Catalyzes the conversion of L-threonine, HCO(3)(-)/CO(2) and ATP to give threonylcarbamoyl-AMP (TC-AMP) as the acyladenylate intermediate, with the release of diphosphate. This is Threonylcarbamoyl-AMP synthase from Halorhodospira halophila (strain DSM 244 / SL1) (Ectothiorhodospira halophila (strain DSM 244 / SL1)).